The chain runs to 444 residues: Exodeoxyribonuclease 7 large subunit (444 aa).

It belongs to the XseA family. As to quaternary structure, heterooligomer composed of large and small subunits.

It is found in the cytoplasm. The catalysed reaction is Exonucleolytic cleavage in either 5'- to 3'- or 3'- to 5'-direction to yield nucleoside 5'-phosphates.. Bidirectionally degrades single-stranded DNA into large acid-insoluble oligonucleotides, which are then degraded further into small acid-soluble oligonucleotides. This chain is Exodeoxyribonuclease 7 large subunit, found in Aliivibrio salmonicida (strain LFI1238) (Vibrio salmonicida (strain LFI1238)).